A 61-amino-acid chain; its full sequence is Metallothionein-2 (61 aa).

At Met1 the chain carries N-acetylmethionine. The segment at 1–29 is beta; it reads MDPNCSCATDGSCSCSGSCKCKECKCTTC. Residues Cys5, Cys7, Cys13, Cys15, Cys19, Cys21, Cys24, Cys26, Cys29, Cys33, Cys34, Cys36, Cys37, Cys41, Cys44, Cys48, Cys50, and Cys57 each coordinate a divalent metal cation. Residues 30 to 61 are alpha; it reads KKSCCSCCPVGCAKCSQGCVCKEASEKCSCCA. At Ser58 the chain carries Phosphoserine. Residues Cys59 and Cys60 each contribute to the a divalent metal cation site.

The protein belongs to the metallothionein superfamily. Type 1 family.

Functionally, metallothioneins have a high content of cysteine residues that bind various heavy metals; these proteins are transcriptionally regulated by both heavy metals and glucocorticoids. The sequence is that of Metallothionein-2 (MT2) from Mesocricetus auratus (Golden hamster).